We begin with the raw amino-acid sequence, 195 residues long: Large ribosomal subunit protein uL5 (195 aa).

The segment at 1–25 is disordered; that stretch reads MARVPPPALKKDKKEKKPPKDNSKN.

This sequence belongs to the universal ribosomal protein uL5 family. Component of the large ribosomal subunit.

Its subcellular location is the nucleus. It localises to the cytoplasm. Functionally, component of the ribosome, a large ribonucleoprotein complex responsible for the synthesis of proteins in the cell. The small ribosomal subunit (SSU) binds messenger RNAs (mRNAs) and translates the encoded message by selecting cognate aminoacyl-transfer RNA (tRNA) molecules. The large subunit (LSU) contains the ribosomal catalytic site termed the peptidyl transferase center (PTC), which catalyzes the formation of peptide bonds, thereby polymerizing the amino acids delivered by tRNAs into a polypeptide chain. The nascent polypeptides leave the ribosome through a tunnel in the LSU and interact with protein factors that function in enzymatic processing, targeting, and the membrane insertion of nascent chains at the exit of the ribosomal tunnel. This Spodoptera frugiperda (Fall armyworm) protein is Large ribosomal subunit protein uL5 (RpL11).